Consider the following 1668-residue polypeptide: Kinesin-like protein KIF21B (1668 aa).

The Kinesin motor domain maps to 8–371 (CVKVAVRIRP…LKYANRARNI (364 aa)). Position 87-94 (87-94 (GQTGAGKT)) interacts with ATP. The stretch at 372-465 (KNKVVVNQDK…LMSQEANLLL (94 aa)) forms a coiled coil. Positions 401–1100 (MEYKAGKRVI…LQALIYNVQH (700 aa)) are interaction with TRIM3. Disordered regions lie at residues 553–629 (KKKE…PEEK) and 837–866 (RVGLKPPNMDSGAEVSASTTSSEAESGARS). Over residues 579 to 628 (NSEETDENEAEEEEEERDESGCEEEEGREDEDEDSGSEESLVDSDSDPEE) the composition is skewed to acidic residues. A Phosphoserine modification is found at serine 580. Phosphothreonine is present on threonine 583. Over residues 847–866 (SGAEVSASTTSSEAESGARS) the composition is skewed to low complexity. A coiled-coil region spans residues 924 to 1019 (IIDIVMQRMT…TKEELDSTDT (96 aa)). 3 positions are modified to phosphoserine: serine 1150, serine 1168, and serine 1217. A compositionally biased stretch (polar residues) spans 1199 to 1219 (LPTRGSTFPRQSRGATDTSPL). The interval 1199–1253 (LPTRGSTFPRQSRGATDTSPLTRRKSYDRGQPIRSTDMGFTPPSSPPTRPRNDRN) is disordered. Phosphothreonine is present on threonine 1239. The residue at position 1243 (serine 1243) is a Phosphoserine. WD repeat units lie at residues 1308–1345 (GHTKPILCLDATDELLFTGSKDRSCKMWNLVTGQEIAA), 1348–1386 (GHPNNVVSIKYCSHSGLVFSVSSSYIKVWDIRDSAKCIR), 1412–1450 (QGEHQINQMALSPSGSMLYVASGNAVRIWELNRFQPIGK), 1453–1495 (GHIG…TGTI), 1504–1541 (PHYDGIECLAIQGDILFSGSRDNGIKKWDLDQQELIQQ), 1545–1584 (AHKDWVCALAFVPGRPMLLSACRAGFIKVWNVDNFTPIGE), and 1587–1624 (GHDSPINAICTNSKHIFTASSDCRVKLWNYVPGLTPCL).

Belongs to the TRAFAC class myosin-kinesin ATPase superfamily. Kinesin family. As to quaternary structure, interacts with TRIM3; the interaction positively affects motility of KIF21B. Interacts with GABARAP and GABA(A) receptor subunits: GABRG2, GABRA1 and GABRA2. May interact with GABA(A) receptor subunits: GABRB2 and GABRB3. As to expression, expressed in brain (at protein level). Expressed in spleen and at lower levels in testes.

The protein localises to the cytoplasm. The protein resides in the cytoskeleton. It is found in the cell projection. Its subcellular location is the dendrite. It localises to the growth cone. The protein localises to the axon. The protein resides in the cytoplasmic vesicle. Functionally, plus-end directed microtubule-dependent motor protein which displays processive activity. Is involved in regulation of microtubule dynamics, synapse function and neuronal morphology, including dendritic tree branching and spine formation. Plays a role in lerning and memory. Involved in delivery of gamma-aminobutyric acid (GABA(A)) receptor to cell surface. In Mus musculus (Mouse), this protein is Kinesin-like protein KIF21B (Kif21b).